The following is a 343-amino-acid chain: Selenide, water dikinase (343 aa).

Sec13 is a catalytic residue. A non-standard amino acid (selenocysteine) is located at residue Sec13. ATP is bound by residues Lys16 and 44-46 (TAD). Asp47 is a binding site for Mg(2+). Residues Asp64, Asp87, and 135 to 137 (GHT) contribute to the ATP site. Asp87 contributes to the Mg(2+) binding site. Asp223 is a binding site for Mg(2+).

Belongs to the selenophosphate synthase 1 family. Class I subfamily. As to quaternary structure, homodimer. Mg(2+) is required as a cofactor.

It catalyses the reaction hydrogenselenide + ATP + H2O = selenophosphate + AMP + phosphate + 2 H(+). Its function is as follows. Synthesizes selenophosphate from selenide and ATP. This chain is Selenide, water dikinase, found in Geobacter metallireducens (strain ATCC 53774 / DSM 7210 / GS-15).